The primary structure comprises 368 residues: 3-isopropylmalate dehydrogenase (368 aa).

79-92 lines the NAD(+) pocket; the sequence is GPRYEGLPWDLRPE. Substrate is bound by residues Arg99, Arg109, Arg138, and Asp228. 3 residues coordinate Mg(2+): Asp228, Asp252, and Asp256. 292-304 provides a ligand contact to NAD(+); the sequence is GSAPDIAGQDRAN.

This sequence belongs to the isocitrate and isopropylmalate dehydrogenases family. LeuB type 1 subfamily. In terms of assembly, homodimer. Mg(2+) is required as a cofactor. It depends on Mn(2+) as a cofactor.

The protein localises to the cytoplasm. The catalysed reaction is (2R,3S)-3-isopropylmalate + NAD(+) = 4-methyl-2-oxopentanoate + CO2 + NADH. Its pathway is amino-acid biosynthesis; L-leucine biosynthesis; L-leucine from 3-methyl-2-oxobutanoate: step 3/4. Catalyzes the oxidation of 3-carboxy-2-hydroxy-4-methylpentanoate (3-isopropylmalate) to 3-carboxy-4-methyl-2-oxopentanoate. The product decarboxylates to 4-methyl-2 oxopentanoate. The polypeptide is 3-isopropylmalate dehydrogenase (Symbiobacterium thermophilum (strain DSM 24528 / JCM 14929 / IAM 14863 / T)).